The primary structure comprises 197 residues: Dephospho-CoA kinase (197 aa).

Residues 2–197 (IIGITGGIAS…SALLLLANPR (196 aa)) enclose the DPCK domain. 10 to 15 (ASGKST) is a binding site for ATP.

This sequence belongs to the CoaE family.

Its subcellular location is the cytoplasm. The enzyme catalyses 3'-dephospho-CoA + ATP = ADP + CoA + H(+). It participates in cofactor biosynthesis; coenzyme A biosynthesis; CoA from (R)-pantothenate: step 5/5. Its function is as follows. Catalyzes the phosphorylation of the 3'-hydroxyl group of dephosphocoenzyme A to form coenzyme A. The sequence is that of Dephospho-CoA kinase from Streptococcus pyogenes serotype M1.